The following is a 234-amino-acid chain: NLP effector protein 1 (234 aa).

The N-terminal stretch at 1–18 (MQLRAFISVFASLACVNA) is a signal peptide. Asn-66 carries N-linked (GlcNAc...) asparagine glycosylation. The Conserved undecapeptide motif I motif lies at 102–112 (AFMYSWYMPKD). The short motif at 119–125 (GHRHDWE) is the Hepta-peptide GHRHDWE motif II element.

This sequence belongs to the Necrosis inducing protein (NPP1) family.

It localises to the secreted. Its function is as follows. Secreted effector that contributes to virulence during infection by P.capsici. Induces distinct chlorosis at 3 days after inoculation of host C.annuum leaves, and all the chlorotic areas gradually turn brown and become moderately necrotic at 7 days after inoculation. Leads only to chlorotic areas, without necrosis at 7 days after non-host N.benthamiana leaves infection. Induces cell death in hot pepper. The polypeptide is NLP effector protein 1 (Phytophthora capsici).